Here is a 473-residue protein sequence, read N- to C-terminus: Dol-P-Glc:Glc(2)Man(9)GlcNAc(2)-PP-Dol alpha-1,2-glucosyltransferase (473 aa).

Residues 1-6 (MAQLEG) are Cytoplasmic-facing. Residues 7–27 (YCFSAALSCTFLVSCLLFSAF) traverse the membrane as a helical segment. Residues 28-64 (SRALREPYMDEIFHLPQAQRYCEGHFSLSQWDPMITT) are Extracellular-facing. The helical transmembrane segment at 65–85 (LPGLYLVSVGVVKPAIWIFAW) threads the bilayer. At 86–97 (SEHVVCSIGMLR) the chain is on the cytoplasmic side. A helical transmembrane segment spans residues 98-118 (FVNLLFSVGNFYLLYLLFHKV). The Extracellular portion of the chain corresponds to 119-126 (QPRNKAAS). Residues 127-147 (SIQRVLSTLTLAVFPTLYFFN) traverse the membrane as a helical segment. The Cytoplasmic portion of the chain corresponds to 148-150 (FLY). Residues 151–171 (YTEAGSMFFTLFAYLMCLYGN) form a helical membrane-spanning segment. Residues 172–175 (HKTS) lie on the Extracellular side of the membrane. The helical transmembrane segment at 176–196 (AFLGFCGFMFRQTNIIWAVFC) threads the bilayer. Topologically, residues 197–256 (AGNVIAQKLTEAWKTELQKKEDRLPPIKGPFAEFRKILQFLLAYSMSFKNLSMLFCLTWP) are cytoplasmic. Residues 257 to 277 (YILLGFLFCAFVVVNGGIVIG) form a helical membrane-spanning segment. Topologically, residues 278–283 (DRSSHE) are extracellular. A helical membrane pass occupies residues 284–304 (ACLHFPQLFYFFSFTLFFSFP). The Cytoplasmic segment spans residues 305-317 (HLLSPSKIKTFLS). The chain crosses the membrane as a helical span at residues 318–338 (LVWKHGILFLVVTLVSVFLVW). The Extracellular segment spans residues 339-365 (KFTYAHKYLLADNRHYTFYVWKRVFQR). A helical transmembrane segment spans residues 366-386 (YAILKYLLVPAYIFAGWSIAD). Residues 387 to 392 (SLKSKP) lie on the Cytoplasmic side of the membrane. Residues 393 to 413 (IFWNLMFFICLFIVIVPQKLL) traverse the membrane as a helical segment. Residues 414 to 436 (EFRYFILPYVIYRLNITLPPTSR) are Extracellular-facing. The chain crosses the membrane as a helical span at residues 437–457 (LVCELSCYAIVNFITFYIFLN). The Cytoplasmic segment spans residues 458–473 (KTFQWPNSQDIQRFMW).

It belongs to the ALG10 glucosyltransferase family. In terms of assembly, interacts with KCNH1; may regulate KCNH1, possibly by regulating its N-glycosylation. Interacts with KCNH2; may reduce KCNH2 sensitivity to classic proarrhythmic drug blockade, possibly by regulating its N-glycosylation. In terms of tissue distribution, highly expressed in heart, placenta, liver, kidney and pancreas. Weakly expressed in lung, skeletal muscle and brain.

Its subcellular location is the endoplasmic reticulum membrane. The enzyme catalyses an alpha-D-Glc-(1-&gt;3)-alpha-D-Glc-(1-&gt;3)-alpha-D-Man-(1-&gt;2)-alpha-D-Man-(1-&gt;2)-alpha-D-Man-(1-&gt;3)-[alpha-D-Man-(1-&gt;2)-alpha-D-Man-(1-&gt;3)-[alpha-D-Man-(1-&gt;2)-alpha-D-Man-(1-&gt;6)]-alpha-D-Man-(1-&gt;6)]-beta-D-Man-(1-&gt;4)-beta-D-GlcNAc-(1-&gt;4)-alpha-D-GlcNAc-diphospho-di-trans,poly-cis-dolichol + a di-trans,poly-cis-dolichyl beta-D-glucosyl phosphate = a alpha-D-Glc-(1-&gt;2)-alpha-D-Glc-(1-&gt;3)-alpha-D-Glc-(1-&gt;3)-alpha-D-Man-(1-&gt;2)-alpha-D-Man-(1-&gt;2)-alpha-D-Man-(1-&gt;3)-[alpha-D-Man-(1-&gt;2)-alpha-D-Man-(1-&gt;3)-[alpha-D-Man-(1-&gt;2)-alpha-D-Man-(1-&gt;6)]-alpha-D-Man-(1-&gt;6)]-beta-D-Man-(1-&gt;4)-beta-D-GlcNAc-(1-&gt;4)-alpha-D-GlcNAc-diphospho-di-trans,poly-cis-dolichol + a di-trans,poly-cis-dolichyl phosphate + H(+). It functions in the pathway protein modification; protein glycosylation. Functionally, dol-P-Glc:Glc(2)Man(9)GlcNAc(2)-PP-Dol alpha-1,2-glucosyltransferase that operates in the biosynthetic pathway of dolichol-linked oligosaccharides, the glycan precursors employed in protein asparagine (N)-glycosylation. The assembly of dolichol-linked oligosaccharides begins on the cytosolic side of the endoplasmic reticulum membrane and finishes in its lumen. The sequential addition of sugars to dolichol pyrophosphate produces dolichol-linked oligosaccharides containing fourteen sugars, including two GlcNAcs, nine mannoses and three glucoses. Once assembled, the oligosaccharide is transferred from the lipid to nascent proteins by oligosaccharyltransferases. In the lumen of the endoplasmic reticulum, adds the third and last glucose residue from dolichyl phosphate glucose (Dol-P-Glc) onto the lipid-linked oligosaccharide intermediate Glc(2)Man(9)GlcNAc(2)-PP-Dol to produce Glc(3)Man(9)GlcNAc(2)-PP-Dol. This Homo sapiens (Human) protein is Dol-P-Glc:Glc(2)Man(9)GlcNAc(2)-PP-Dol alpha-1,2-glucosyltransferase.